The chain runs to 919 residues: Synphilin-1 (919 aa).

Disordered regions lie at residues 80-99 (SPLK…DQKN), 108-140 (GGES…STSL), and 287-313 (SSAA…EERS). The segment covering 299-308 (SGLNRTSSQG) has biased composition (polar residues). ANK repeat units follow at residues 349-380 (NGNN…CLNE), 384-413 (EKLT…AIAE), 419-448 (DFPS…EQGI), and 456-485 (DGNS…NVTM). Residues 515–552 (CMSLASQVVKLTKQLKEQTVERVTLQNQLQQFLEAQKS) adopt a coiled-coil conformation. 3 disordered regions span residues 549–615 (AQKS…KDED), 666–713 (RLRQ…SMDS), and 728–919 (SGGR…NKAA). The segment covering 555–571 (KSLPSSPSSPSSPASRK) has biased composition (low complexity). One copy of the ANK 5 repeat lies at 603–632 (ASSRARPKAKDEDSDKILRQLLGKEISENV). Over residues 667–685 (LRQLMQRSLSESDTDSNNS) the composition is skewed to low complexity. Residues 686-700 (EDPKTTPVRKADRPR) are compositionally biased toward basic and acidic residues. Residues 699 to 729 (PRPQPIVESVESMDSAESLHLMIKKHTLASG) form an ANK 6 repeat. Residues 774–785 (PSGDPQQPSPDS) are compositionally biased toward low complexity. Residues 833–842 (NGEKDKDKGR) are compositionally biased toward basic and acidic residues. The span at 844–854 (LQRTSTSNESG) shows a compositional bias: polar residues. Low complexity predominate over residues 874 to 886 (NQNNNNNYQAANQ).

Homodimer. Heterodimer of isoform 1 and isoform 2. Interacts with SIAH1, SIAH2, SNCA, RNF19A and PRKN. Isoform 2 has a strong tendency to form aggregates and can sequester isoform 1. Ubiquitinated; mediated by SIAH1, SIAH2 or RNF19A and leading to its subsequent proteasomal degradation. In the absence of proteasomal degradation, ubiquitinated SNCAIP accumulates in cytoplasmic inclusion bodies. Isoform 2 is subject to limited ubiquitination that does not lead to proteasomal degradation. As to expression, detected in brain (at protein level). Widely expressed, with highest levels in brain, heart and placenta.

It is found in the cytoplasm. In terms of biological role, isoform 2 inhibits the ubiquitin ligase activity of SIAH1 and inhibits proteasomal degradation of target proteins. Isoform 2 inhibits autoubiquitination and proteasomal degradation of SIAH1, and thereby increases cellular levels of SIAH. Isoform 2 modulates SNCA monoubiquitination by SIAH1. In Homo sapiens (Human), this protein is Synphilin-1 (SNCAIP).